The primary structure comprises 75 residues: uncharacterized protein (75 aa).

The protein localises to the plastid. Its subcellular location is the chloroplast. This is an uncharacterized protein from Calycanthus floridus var. glaucus (Eastern sweetshrub).